The chain runs to 455 residues: Bifunctional protein GlmU (455 aa).

Positions 1 to 232 (MASTTGALIL…DPNLLGVNNP (232 aa)) are pyrophosphorylase. UDP-N-acetyl-alpha-D-glucosamine contacts are provided by residues 10–13 (LAAG), Lys-24, Gln-75, and 80–81 (GT). Residue Asp-106 coordinates Mg(2+). The UDP-N-acetyl-alpha-D-glucosamine site is built by Gly-141, Glu-155, Asn-172, and Asn-230. Asn-230 is a binding site for Mg(2+). The segment at 233-253 (AELIRSEALLRTRLVIGHIEG) is linker. The interval 254 to 455 (GVLIHAPETV…QTNLPRKPKA (202 aa)) is N-acetyltransferase. UDP-N-acetyl-alpha-D-glucosamine-binding residues include Arg-336 and Lys-354. His-366 (proton acceptor) is an active-site residue. UDP-N-acetyl-alpha-D-glucosamine-binding residues include Tyr-369 and Asn-380. Acetyl-CoA-binding positions include Ala-383, 389–390 (NY), Ser-408, Ala-426, and Arg-443.

The protein in the N-terminal section; belongs to the N-acetylglucosamine-1-phosphate uridyltransferase family. This sequence in the C-terminal section; belongs to the transferase hexapeptide repeat family. In terms of assembly, homotrimer. Mg(2+) is required as a cofactor.

The protein resides in the cytoplasm. The catalysed reaction is alpha-D-glucosamine 1-phosphate + acetyl-CoA = N-acetyl-alpha-D-glucosamine 1-phosphate + CoA + H(+). It carries out the reaction N-acetyl-alpha-D-glucosamine 1-phosphate + UTP + H(+) = UDP-N-acetyl-alpha-D-glucosamine + diphosphate. It functions in the pathway nucleotide-sugar biosynthesis; UDP-N-acetyl-alpha-D-glucosamine biosynthesis; N-acetyl-alpha-D-glucosamine 1-phosphate from alpha-D-glucosamine 6-phosphate (route II): step 2/2. The protein operates within nucleotide-sugar biosynthesis; UDP-N-acetyl-alpha-D-glucosamine biosynthesis; UDP-N-acetyl-alpha-D-glucosamine from N-acetyl-alpha-D-glucosamine 1-phosphate: step 1/1. Its pathway is bacterial outer membrane biogenesis; LPS lipid A biosynthesis. In terms of biological role, catalyzes the last two sequential reactions in the de novo biosynthetic pathway for UDP-N-acetylglucosamine (UDP-GlcNAc). The C-terminal domain catalyzes the transfer of acetyl group from acetyl coenzyme A to glucosamine-1-phosphate (GlcN-1-P) to produce N-acetylglucosamine-1-phosphate (GlcNAc-1-P), which is converted into UDP-GlcNAc by the transfer of uridine 5-monophosphate (from uridine 5-triphosphate), a reaction catalyzed by the N-terminal domain. This Nitratidesulfovibrio vulgaris (strain DP4) (Desulfovibrio vulgaris) protein is Bifunctional protein GlmU.